The primary structure comprises 137 residues: NADH-quinone oxidoreductase subunit A (137 aa).

The next 3 membrane-spanning stretches (helical) occupy residues 12 to 32 (WGFAIFLLGVVGLCAFMLGLS), 66 to 86 (FYLVAMLFVIFDIEALFLFAW), and 95 to 115 (WTGFVEALVFIAILLAGLVYL).

The protein belongs to the complex I subunit 3 family. As to quaternary structure, NDH-1 is composed of 13 different subunits. Subunits NuoA, H, J, K, L, M, N constitute the membrane sector of the complex.

It is found in the cell inner membrane. It catalyses the reaction a quinone + NADH + 5 H(+)(in) = a quinol + NAD(+) + 4 H(+)(out). In terms of biological role, NDH-1 shuttles electrons from NADH, via FMN and iron-sulfur (Fe-S) centers, to quinones in the respiratory chain. The immediate electron acceptor for the enzyme in this species is believed to be ubiquinone. Couples the redox reaction to proton translocation (for every two electrons transferred, four hydrogen ions are translocated across the cytoplasmic membrane), and thus conserves the redox energy in a proton gradient. The protein is NADH-quinone oxidoreductase subunit A of Pseudomonas putida (strain ATCC 700007 / DSM 6899 / JCM 31910 / BCRC 17059 / LMG 24140 / F1).